Consider the following 825-residue polypeptide: MKLYCNSNEVRSRTLATLRQLRQPSPATFLDTRRVDARIIKTGFDTDTCRSNFIVEDLLRRGQVSAARKVYDEMPHKNTVSTNTMISGHVKTGDVSSARDLFDAMPDRTVVTWTILMGWYARNSHFDEAFKLFRQMCRSSSCTLPDHVTFTTLLPGCNDAVPQNAVGQVHAFAVKLGFDTNPFLTVSNVLLKSYCEVRRLDLACVLFEEIPEKDSVTFNTLITGYEKDGLYTESIHLFLKMRQSGHQPSDFTFSGVLKAVVGLHDFALGQQLHALSVTTGFSRDASVGNQILDFYSKHDRVLETRMLFDEMPELDFVSYNVVISSYSQADQYEASLHFFREMQCMGFDRRNFPFATMLSIAANLSSLQMGRQLHCQALLATADSILHVGNSLVDMYAKCEMFEEAELIFKSLPQRTTVSWTALISGYVQKGLHGAGLKLFTKMRGSNLRADQSTFATVLKASASFASLLLGKQLHAFIIRSGNLENVFSGSGLVDMYAKCGSIKDAVQVFEEMPDRNAVSWNALISAHADNGDGEAAIGAFAKMIESGLQPDSVSILGVLTACSHCGFVEQGTEYFQAMSPIYGITPKKKHYACMLDLLGRNGRFAEAEKLMDEMPFEPDEIMWSSVLNACRIHKNQSLAERAAEKLFSMEKLRDAAAYVSMSNIYAAAGEWEKVRDVKKAMRERGIKKVPAYSWVEVNHKIHVFSSNDQTHPNGDEIVRKINELTAEIEREGYKPDTSSVVQDVDEQMKIESLKYHSERLAVAFALISTPEGCPIVVMKNLRACRDCHAAIKLISKIVKREITVRDTSRFHHFSEGVCSCGDYW.

17 PPR repeats span residues 47 to 77 (DTCR…MPHK), 78 to 108 (NTVS…MPDR), 109 to 143 (TVVT…SSCT), 146 to 180 (DHVT…GFDT), 183 to 213 (FLTV…IPEK), 214 to 248 (DSVT…GHQP), 249 to 283 (SDFT…GFSR), 284 to 314 (DASV…MPEL), 315 to 349 (DFVS…GFDR), 350 to 384 (RNFP…TADS), 385 to 415 (ILHV…LPQR), 416 to 450 (TTVS…NLRA), 451 to 485 (DQST…GNLE), 486 to 516 (NVFS…MPDR), 517 to 551 (NAVS…GLQP), 552 to 587 (DSVS…GITP), and 588 to 618 (KKKH…MPFE). A type E motif region spans residues 623–699 (MWSSVLNACR…VPAYSWVEVN (77 aa)). The tract at residues 700–730 (HKIHVFSSNDQTHPNGDEIVRKINELTAEIE) is type E(+) motif. The segment at 731 to 825 (REGYKPDTSS…EGVCSCGDYW (95 aa)) is type DYW motif.

Belongs to the PPR family. PCMP-H subfamily.

This is Putative pentatricopeptide repeat-containing protein At2g01510 (PCMP-H36) from Arabidopsis thaliana (Mouse-ear cress).